Here is a 723-residue protein sequence, read N- to C-terminus: ADP-ribosylation factor-binding protein GGA3 (723 aa).

Positions 1-313 (MAEAEGESLE…GEVATLTLPD (313 aa)) are binds to ARF1 (in long isoform). One can recognise a VHS domain in the interval 16-146 (ATNPSNRQED…MLKRQGIVQS (131 aa)). 2 positions are modified to phosphoserine: S159 and S275. The GAT domain maps to 171-298 (DEEKSKLLAK…VINSYKTIIE (128 aa)). The unstructured hinge stretch occupies residues 299–593 (GQVINGEVAT…IHVPLESIKP (295 aa)). The tract at residues 339–384 (SSVLAPAPTPPSSGIPILPPPPQASGPPRSRSSSQAEATLGPSSTS) is disordered. A compositionally biased stretch (pro residues) spans 345–363 (APTPPSSGIPILPPPPQAS). Residues 364-374 (GPPRSRSSSQA) are compositionally biased toward low complexity. The DXXLL signature appears at 391 to 395 (DEELL). Residues 428–464 (DFFSPRPGTAACGASDAPLLQPSAPSSSSSQAPLPPP) form a disordered region. Over residues 441–459 (ASDAPLLQPSAPSSSSSQA) the composition is skewed to low complexity. Positions 594–715 (SSALPVTAYD…TEVGEVDQFP (122 aa)) constitute a GAE domain.

It belongs to the GGA protein family. As to quaternary structure, monomer. Interacts with GGA1 and GGA2. Binds to clathrin and activated ARFs, such as ARF1, ARF5 and ARF6. Binds RABEP1 and RABGEF1. Interacts with the membrane proteins M6PR/CD-MPR and IGF2R/CI-MPR and the accessory proteins SYNRG, EPN4, NECAP1, NECAP2 and AFTPH/aftiphilin. Interacts with TSG101 and UBC. Interacts with ADRA2B. Interacts with NTRK1; the interaction is independent of NTRK1 activation and ubiquitination. Interacts (via VHS domain) with BACE1 (via DXXLL motif). In terms of processing, phosphorylated by CK2 and dephosphorylated by PP2A. Phosphorylation of GGA3 allows the internal DXXLL motif to bind the VHS domain and to inhibit the recognition of cargo signals. Ubiquitinated. Post-translationally, proteolytically cleaved during apoptosis by CASP3. As to expression, ubiquitously expressed.

The protein localises to the golgi apparatus. It is found in the trans-Golgi network membrane. It localises to the endosome membrane. Its subcellular location is the early endosome membrane. The protein resides in the recycling endosome membrane. Functionally, plays a role in protein sorting and trafficking between the trans-Golgi network (TGN) and endosomes. Mediates the ARF-dependent recruitment of clathrin to the TGN and binds ubiquitinated proteins and membrane cargo molecules with a cytosolic acidic cluster-dileucine (DXXLL) motif. Mediates export of the GPCR receptor ADRA2B to the cell surface. nvolved in BACE1 transport and sorting as well as regulation of BACE1 protein levels. Regulates retrograde transport of BACE1 from endosomes to the trans-Golgi network via interaction through the VHS motif and dependent of BACE1 phosphorylation. Modulates BACE1 protein levels independently of the interaction between VHS domain and DXXLL motif through recognition of ubiquitination. Key player in a novel DXXLL-mediated endosomal sorting machinery to the recycling pathway that targets NTRK1 to the plasma membrane. This Homo sapiens (Human) protein is ADP-ribosylation factor-binding protein GGA3.